A 941-amino-acid chain; its full sequence is Cilia- and flagella-associated protein 69 (941 aa).

Residues 1–14 show a composition bias toward low complexity; it reads MWTEEAGATAEAQE. Residues 1–26 are disordered; sequence MWTEEAGATAEAQESGIRNKSSSSSQ. Residues 16–26 show a composition bias toward polar residues; the sequence is GIRNKSSSSSQ.

Highly expressed in the testis, specifically in sperm (at protein level). Expressed in the brain, kidney, liver, lung, and intestine.

Its subcellular location is the cell projection. It localises to the cilium. The protein resides in the flagellum. In terms of biological role, cilium- and flagellum-associated protein. In the olfactory epithelium, regulates the speed of activation and termination of the odor response and thus contributes to the robustness of olfactory transduction pathways. Required for sperm flagellum assembly and stability. The polypeptide is Cilia- and flagella-associated protein 69 (Homo sapiens (Human)).